A 335-amino-acid chain; its full sequence is Pyridoxal 5'-phosphate synthase subunit PdxS (335 aa).

Position 30 (Asp30) interacts with D-ribose 5-phosphate. Residue Lys87 is the Schiff-base intermediate with D-ribose 5-phosphate of the active site. Gly159 provides a ligand contact to D-ribose 5-phosphate. Arg171 contacts D-glyceraldehyde 3-phosphate. D-ribose 5-phosphate is bound by residues Gly257 and 278–279; that span reads GS.

Belongs to the PdxS/SNZ family. In the presence of PdxT, forms a dodecamer of heterodimers.

The enzyme catalyses aldehydo-D-ribose 5-phosphate + D-glyceraldehyde 3-phosphate + L-glutamine = pyridoxal 5'-phosphate + L-glutamate + phosphate + 3 H2O + H(+). The protein operates within cofactor biosynthesis; pyridoxal 5'-phosphate biosynthesis. Its function is as follows. Catalyzes the formation of pyridoxal 5'-phosphate from ribose 5-phosphate (RBP), glyceraldehyde 3-phosphate (G3P) and ammonia. The ammonia is provided by the PdxT subunit. Can also use ribulose 5-phosphate and dihydroxyacetone phosphate as substrates, resulting from enzyme-catalyzed isomerization of RBP and G3P, respectively. This is Pyridoxal 5'-phosphate synthase subunit PdxS from Thermococcus onnurineus (strain NA1).